Here is a 125-residue protein sequence, read N- to C-terminus: MHKSISYGRELRLLTPSHFQTVFSNPPVKAVTAHVTMLATPNELGHPRIGVTVSKKRAKRAVDRNRIKRQIRETFRLRQHKIPAFDIVIIAKQGIVEQDNAALRDTLNYLWRKLAKRCEQYQSRS.

This sequence belongs to the RnpA family. In terms of assembly, consists of a catalytic RNA component (M1 or rnpB) and a protein subunit.

The enzyme catalyses Endonucleolytic cleavage of RNA, removing 5'-extranucleotides from tRNA precursor.. RNaseP catalyzes the removal of the 5'-leader sequence from pre-tRNA to produce the mature 5'-terminus. It can also cleave other RNA substrates such as 4.5S RNA. The protein component plays an auxiliary but essential role in vivo by binding to the 5'-leader sequence and broadening the substrate specificity of the ribozyme. The polypeptide is Ribonuclease P protein component (Idiomarina loihiensis (strain ATCC BAA-735 / DSM 15497 / L2-TR)).